Reading from the N-terminus, the 155-residue chain is DNA gyrase inhibitor (155 aa).

The protein belongs to the DNA gyrase inhibitor family. Interacts with DNA gyrase.

It localises to the cytoplasm. Functionally, inhibits the supercoiling activity of DNA gyrase. Acts by inhibiting DNA gyrase at an early step, prior to (or at the step of) binding of DNA by the gyrase. It protects cells against toxins that target DNA gyrase, by inhibiting activity of these toxins and reducing the formation of lethal double-strand breaks in the cell. This Escherichia fergusonii (strain ATCC 35469 / DSM 13698 / CCUG 18766 / IAM 14443 / JCM 21226 / LMG 7866 / NBRC 102419 / NCTC 12128 / CDC 0568-73) protein is DNA gyrase inhibitor.